The sequence spans 203 residues: ATP-dependent Clp protease proteolytic subunit 1 (203 aa).

The active-site Nucleophile is Ser-102. The active site involves His-127.

This sequence belongs to the peptidase S14 family. Fourteen ClpP subunits assemble into 2 heptameric rings which stack back to back to give a disk-like structure with a central cavity, resembling the structure of eukaryotic proteasomes.

The protein resides in the cytoplasm. It catalyses the reaction Hydrolysis of proteins to small peptides in the presence of ATP and magnesium. alpha-casein is the usual test substrate. In the absence of ATP, only oligopeptides shorter than five residues are hydrolyzed (such as succinyl-Leu-Tyr-|-NHMec, and Leu-Tyr-Leu-|-Tyr-Trp, in which cleavage of the -Tyr-|-Leu- and -Tyr-|-Trp bonds also occurs).. Its function is as follows. Cleaves peptides in various proteins in a process that requires ATP hydrolysis. Has a chymotrypsin-like activity. Plays a major role in the degradation of misfolded proteins. This is ATP-dependent Clp protease proteolytic subunit 1 from Rhizobium johnstonii (strain DSM 114642 / LMG 32736 / 3841) (Rhizobium leguminosarum bv. viciae).